A 294-amino-acid polypeptide reads, in one-letter code: Elongation factor Ts (294 aa).

The interval 80-83 (TDFV) is involved in Mg(2+) ion dislocation from EF-Tu.

The protein belongs to the EF-Ts family.

The protein localises to the cytoplasm. Functionally, associates with the EF-Tu.GDP complex and induces the exchange of GDP to GTP. It remains bound to the aminoacyl-tRNA.EF-Tu.GTP complex up to the GTP hydrolysis stage on the ribosome. In Polynucleobacter necessarius subsp. necessarius (strain STIR1), this protein is Elongation factor Ts.